Reading from the N-terminus, the 208-residue chain is High frequency lysogenization protein HflD homolog (208 aa).

Belongs to the HflD family.

Its subcellular location is the cytoplasm. The protein resides in the cell inner membrane. This Pseudomonas entomophila (strain L48) protein is High frequency lysogenization protein HflD homolog.